The chain runs to 332 residues: RNA polymerase principal sigma factor HrdD (332 aa).

A disordered region spans residues 1 to 21; the sequence is MATRAVARRQPAASGETGAAG. Residues 124-137 carry the Polymerase core binding motif; the sequence is DLIQEGNAGLVRAV. Positions 294–313 form a DNA-binding region, H-T-H motif; it reads LTEVGKQHGLTRERIRQIEK.

It belongs to the sigma-70 factor family.

Functionally, sigma factors are initiation factors that promote the attachment of RNA polymerase to specific initiation sites and are then released. This chain is RNA polymerase principal sigma factor HrdD (hrdD), found in Streptomyces griseus.